A 150-amino-acid chain; its full sequence is Transcription antitermination protein NusB (150 aa).

This sequence belongs to the NusB family.

In terms of biological role, involved in transcription antitermination. Required for transcription of ribosomal RNA (rRNA) genes. Binds specifically to the boxA antiterminator sequence of the ribosomal RNA (rrn) operons. The sequence is that of Transcription antitermination protein NusB from Streptococcus equi subsp. zooepidemicus (strain H70).